Here is a 105-residue protein sequence, read N- to C-terminus: Heat shock protein HspQ (105 aa).

Belongs to the HspQ family.

Its subcellular location is the cytoplasm. In terms of biological role, involved in the degradation of certain denaturated proteins, including DnaA, during heat shock stress. In Klebsiella pneumoniae (strain 342), this protein is Heat shock protein HspQ.